The chain runs to 593 residues: RNA-binding protein 47 (593 aa).

Low complexity predominate over residues 1 to 20 (MTAEDSTAAMSSDSAAGSSA). Positions 1-25 (MTAEDSTAAMSSDSAAGSSAKVPEG) are disordered. 3 RRM domains span residues 71 to 149 (CEVF…CSVD), 151 to 233 (CRLF…WAEP), and 246 to 318 (KILY…LAKP). Omega-N-methylarginine is present on arginine 332. Residues arginine 394 and arginine 405 each carry the asymmetric dimethylarginine; alternate modification. 2 positions are modified to omega-N-methylarginine; alternate: arginine 394 and arginine 405.

It belongs to the RRM RBM47 family. Homodimer. Interacts with A1CF. Interacts with APOBEC1; form an mRNA editing complex. Interacts with RBPMS.

Its subcellular location is the nucleus. The protein resides in the cytoplasm. In terms of biological role, single-stranded RNA-binding protein that functions in a variety of RNA processes, including alternative splicing, RNA stabilization, and RNA editing. Functions as an enzyme-substrate adapter for the cytidine deaminase APOBEC1. With APOBEC1 forms an mRNA editing complex involved into cytidine to uridine editing of a variety of mRNA molecules. Through the binding of their 3'UTR, also stabilizes a variety of mRNAs and regulates the expression of genes such as the interferon alpha/beta receptor and interleukin-10. Also involved in the alternative splicing of several genes including TJP1. Binds the pre-mRNA (U)GCAUG consensus sequences in downstream intronic regions of alternative exons, regulating their exclusion and inclusion into mRNAs. Independently of its RNA-binding activity, could negatively regulate MAVS by promoting its lysosomal degradation. This is RNA-binding protein 47 from Homo sapiens (Human).